A 187-amino-acid polypeptide reads, in one-letter code: MTNKCLLQIALLLCFSTTALSMSYNLLGFLQRSSSFQCQKLLWQLNGRLEYCLKDRMNFDIPEEIKQPQQFQKEDAALTIYEMLQNIYAIFRQDLSSTGWNETIVENLLANVYHQIDHLKTILEEKLEKEDFTRGKFVSSLHLKRYYGRILHYLKAKEYSHCAWTIVRVEILRNFFFINKLTGYLRN.

Residues 1 to 21 form the signal peptide; the sequence is MTNKCLLQIALLLCFSTTALS. Y24 bears the Phosphotyrosine mark. Residues C52 and C162 are joined by a disulfide bond. The N-linked (GlcNAc...) asparagine glycan is linked to N101.

Belongs to the alpha/beta interferon family. In terms of assembly, monomer.

It localises to the secreted. In terms of biological role, type I interferon cytokine that plays a key role in the innate immune response to infection, developing tumors and other inflammatory stimuli. Signals via binding to high-affinity (IFNAR2) and low-affinity (IFNAR1) heterodimeric receptor, activating the canonical Jak-STAT signaling pathway resulting in transcriptional activation or repression of interferon-regulated genes that encode the effectors of the interferon response, such as antiviral proteins, regulators of cell proliferation and differentiation, and immunoregulatory proteins. Signals mostly via binding to a IFNAR1-IFNAR2 heterodimeric receptor, but can also function with IFNAR1 alone and independently of Jak-STAT pathways. Elicits a wide variety of responses, including antiviral and antibacterial activities, and can regulate the development of B-cells, myelopoiesis and lipopolysaccharide (LPS)-inducible production of tumor necrosis factor. Plays a role in neuronal homeostasis by regulating dopamine turnover and protecting dopaminergic neurons: acts by promoting neuronal autophagy and alpha-synuclein clearance, thereby preventing dopaminergic neuron loss. IFNB1 is more potent than interferon-alpha (IFN-alpha) in inducing the apoptotic and antiproliferative pathways required for control of tumor cell growth. The sequence is that of Interferon beta (IFNB1) from Macaca fascicularis (Crab-eating macaque).